The primary structure comprises 118 residues: Large ribosomal subunit protein bL20 (118 aa).

It belongs to the bacterial ribosomal protein bL20 family.

In terms of biological role, binds directly to 23S ribosomal RNA and is necessary for the in vitro assembly process of the 50S ribosomal subunit. It is not involved in the protein synthesizing functions of that subunit. This is Large ribosomal subunit protein bL20 from Cupriavidus metallidurans (strain ATCC 43123 / DSM 2839 / NBRC 102507 / CH34) (Ralstonia metallidurans).